Consider the following 105-residue polypeptide: Large ribosomal subunit protein uL24 (105 aa).

Residues 75-105 are disordered; that stretch reads DSDGNPTRVGYRTDEESGKRVRISRKNGKDI. Positions 94-105 are enriched in basic residues; that stretch reads RVRISRKNGKDI.

Belongs to the universal ribosomal protein uL24 family. In terms of assembly, part of the 50S ribosomal subunit.

Its function is as follows. One of two assembly initiator proteins, it binds directly to the 5'-end of the 23S rRNA, where it nucleates assembly of the 50S subunit. One of the proteins that surrounds the polypeptide exit tunnel on the outside of the subunit. This chain is Large ribosomal subunit protein uL24, found in Rhodococcus jostii (strain RHA1).